A 529-amino-acid polypeptide reads, in one-letter code: MTSETVIAPSLSTAQNDGTFTYDKVKSTAKERKHLNLKNPSDANEIKSKIWNYYSLSELIQYLGQKENDDFKYKRITLQFPDNLICDSATIVHELQRELNIVPQANQDTGESNTAQRVWILADTSYSACCVDEVAAEHVRSDLVVHFGDACLNEIDKLQAVFVLGKPTLDVDAIVKQIKTAYSTEQKVVLMSDAPHTYLLPEIAKQLPDYDILIADLPKTSRAKIIGYTPPPTGHKKFNRVFNTDTVEFGKYELFHITSPESPRLLQLTTNFASVTTYDPISGTVSTGPFPNLMRRYKYVHQARMAGTVGILVNTLSLANTKVLLNTIKEKIKEAGKKHYIFVVGKPNVAKLANFESVDIWCILGCDHQGIIIDQINEYYKPIVTPYELLLGLSDELSWTGKWVVDYKSVLEEYGNEVIQQNEDPDTDEDLPPVFDPVTGRYVSTSKPLRQINHLMVTSSEQGGVDDHDNQLVKRFSNAVAIKGTVSTSAIHLQNRHWTGLGSDYTEDENAAGALVEDGRKGIARGYDI.

Cys130, Cys151, and Cys366 together coordinate [4Fe-4S] cluster.

Belongs to the DPH1/DPH2 family. DPH2 subfamily. In terms of assembly, component of the 2-(3-amino-3-carboxypropyl)histidine synthase complex composed of DPH1, DPH2, DPH3 and a NADH-dependent reductase, predominantly CBR1. [4Fe-4S] cluster serves as cofactor.

It is found in the cytoplasm. Its pathway is protein modification; peptidyl-diphthamide biosynthesis. Required for the first step of diphthamide biosynthesis, a post-translational modification of histidine which occurs in elongation factor 2. DPH1 and DPH2 transfer a 3-amino-3-carboxypropyl (ACP) group from S-adenosyl-L-methionine (SAM) to a histidine residue, the reaction is assisted by a reduction system comprising DPH3 and a NADH-dependent reductase, predominantly CBR1. Facilitates the reduction of the catalytic iron-sulfur cluster found in the DPH1 subunit. This chain is 2-(3-amino-3-carboxypropyl)histidine synthase subunit 2-2, found in Candida albicans (strain SC5314 / ATCC MYA-2876) (Yeast).